A 309-amino-acid chain; its full sequence is MRKKISIIGAGFVGSTTAHWLAAKELGDIVLLDIVEGVPQGKALDLYEASPIEGFDVRVTGTNNYADTANSDVIVVTSGAPRKPGMSREDLIKVNADITRACISQAAPLSPNAVIIMVNNPLDAMTYLAAEVSGFPKERVIGQAGVLDAARYRTFIAMEAGVSVEDVQAMLMGGHGDEMVPLPRFSTISGIPVSEFIAPDRLAQIVERTRKGGGEIVNLLKTGSAYYAPAAATAQMVEAVLKDKKRVMPVAAYLTGQYGLNDIYFGVPVILGAGGVEKILELPLNEEEMALLNASAKAVRATLDTLKSL.

Residues 9–14 (GAGFVG) and Asp33 contribute to the NAD(+) site. Residues Arg82 and Arg88 each contribute to the substrate site. NAD(+)-binding positions include Asn95 and 118–120 (VNN). Substrate-binding residues include Asn120 and Arg151. Residue His175 is the Proton acceptor of the active site.

Belongs to the LDH/MDH superfamily. MDH type 3 family.

The enzyme catalyses (S)-malate + NAD(+) = oxaloacetate + NADH + H(+). Its function is as follows. Catalyzes the reversible oxidation of malate to oxaloacetate. The chain is Malate dehydrogenase from Chloroflexus aurantiacus (strain ATCC 29364 / DSM 637 / Y-400-fl).